The chain runs to 202 residues: Crustacean calcium-binding protein 23 (202 aa).

At serine 1 the chain carries N-acetylserine. EF-hand domains follow at residues 33–68, 69–104, 105–140, and 148–185; these read SGLL…FGLD, LSDG…EMTE, PRKK…KTHP, and TEDE…LSKA. Residues aspartate 84, glutamate 93, aspartate 118, aspartate 122, and aspartate 129 each contribute to the Ca(2+) site.

In terms of assembly, monomer or disulfide-linked dimers. Striated muscle and brain.

Functionally, possibly acts as a regulatory protein and not as a calcium buffer or transport protein. This is Crustacean calcium-binding protein 23 from Faxonius limosus (Spinycheek crayfish).